A 488-amino-acid chain; its full sequence is E3 ubiquitin-protein ligase TRIM39 (488 aa).

An RING-type zinc finger spans residues 29-70 (CSVCLEYLKEPVIIECGHNFCKACITRWWEDLERDFPCPVCR). Residues 102-143 (RDESLCSQHHEPLSLFCYEDQEAVCLICAISHTHRPHTVVPM) form a B box-type zinc finger. Zn(2+) contacts are provided by cysteine 107, histidine 110, cysteine 129, and histidine 135. Positions 181-250 (ELKRLVESRR…AHLAAEVEGK (70 aa)) form a coiled coil. 2 interaction with CDKN1A regions span residues 268 to 307 (KCEK…QLIA) and 359 to 488 (TSGR…TDWE). Residues 289–484 (SNFPRQYFAL…NAAPLTIRPP (196 aa)) form the B30.2/SPRY domain.

The protein belongs to the TRIM/RBCC family. In terms of assembly, interacts with MOAP1. Interacts with CDKN1A. In terms of processing, autoubiquitinated.

It is found in the cytoplasm. The protein resides in the cytosol. Its subcellular location is the mitochondrion. The protein localises to the nucleus. It carries out the reaction S-ubiquitinyl-[E2 ubiquitin-conjugating enzyme]-L-cysteine + [acceptor protein]-L-lysine = [E2 ubiquitin-conjugating enzyme]-L-cysteine + N(6)-ubiquitinyl-[acceptor protein]-L-lysine.. It functions in the pathway protein modification; protein ubiquitination. Its function is as follows. E3 ubiquitin-protein ligase. May facilitate apoptosis by inhibiting APC/C-Cdh1-mediated poly-ubiquitination and subsequent proteasome-mediated degradation of the pro-apoptotic protein MOAP1. Regulates the G1/S transition of the cell cycle and DNA damage-induced G2 arrest by stabilizing CDKN1A/p21. Positively regulates CDKN1A/p21 stability by competing with DTL for CDKN1A/p21 binding, therefore disrupting DCX(DTL) E3 ubiquitin ligase complex-mediated CDKN1A/p21 ubiquitination and degradation. In Mus musculus (Mouse), this protein is E3 ubiquitin-protein ligase TRIM39 (Trim39).